A 389-amino-acid polypeptide reads, in one-letter code: Succinate--CoA ligase [ADP-forming] subunit beta (389 aa).

The ATP-grasp domain maps to 9 to 244 (KQLFADYGLP…PSQEDERERR (236 aa)). ATP contacts are provided by residues lysine 46, 53 to 55 (GRG), glutamate 99, threonine 102, and glutamate 107. 2 residues coordinate Mg(2+): asparagine 199 and aspartate 213. Substrate contacts are provided by residues asparagine 264 and 321-323 (GIV).

It belongs to the succinate/malate CoA ligase beta subunit family. Heterotetramer of two alpha and two beta subunits. Requires Mg(2+) as cofactor.

It catalyses the reaction succinate + ATP + CoA = succinyl-CoA + ADP + phosphate. The catalysed reaction is GTP + succinate + CoA = succinyl-CoA + GDP + phosphate. It participates in carbohydrate metabolism; tricarboxylic acid cycle; succinate from succinyl-CoA (ligase route): step 1/1. Functionally, succinyl-CoA synthetase functions in the citric acid cycle (TCA), coupling the hydrolysis of succinyl-CoA to the synthesis of either ATP or GTP and thus represents the only step of substrate-level phosphorylation in the TCA. The beta subunit provides nucleotide specificity of the enzyme and binds the substrate succinate, while the binding sites for coenzyme A and phosphate are found in the alpha subunit. The polypeptide is Succinate--CoA ligase [ADP-forming] subunit beta (Alcanivorax borkumensis (strain ATCC 700651 / DSM 11573 / NCIMB 13689 / SK2)).